We begin with the raw amino-acid sequence, 316 residues long: ATP synthase gamma chain (316 aa).

Belongs to the ATPase gamma chain family. F-type ATPases have 2 components, CF(1) - the catalytic core - and CF(0) - the membrane proton channel. CF(1) has five subunits: alpha(3), beta(3), gamma(1), delta(1), epsilon(1). CF(0) has three main subunits: a, b and c.

The protein resides in the cellular thylakoid membrane. Its function is as follows. Produces ATP from ADP in the presence of a proton gradient across the membrane. The gamma chain is believed to be important in regulating ATPase activity and the flow of protons through the CF(0) complex. The chain is ATP synthase gamma chain from Synechococcus sp. (strain WH7803).